Reading from the N-terminus, the 840-residue chain is MTQELKSKLLSFFKFIFATALFIFVIFTLYRELSHINFKETFIQFGKINRLWLVLLFAGGGLSLILLSLYDIILVKALKLKMPLIRVFRVSYIINALNSIIGFGGFIGAGVRAFVYKNYTNDTKKLVQYISIILVSMLTGLSLLSILVVLRIFNASHMIDEISWVRWILYIVALFLPIFIFYTVARPVDRNNRYMGVYCTVVSCVEWMAAATVLYFAALIVDIHISFMTFVGIFVIAALSGLVSFIPGGFGAFDLVVLLGLKSLGISEEKILLALVLYRFAYYFVPVMIALILSSFEFGNTAKKYLDNSKYFIPVKDFTSFLRSYQKDILAKVPSFSLAILIFLTSIIFFINNLTIVYDGLYDGNHFAYYIALAVQTSACLLLILNVRGIYKGSRRAIIYAFISIILIASATIYTYASFLLLSWLIIIFVLLILAYQRAQVLKRPLRFKKLAVMLLLSIFILYLNHILISGTLYALDVYHIEIDTSLLRYYFWMTIVIIMLLVGVIAWLFDYKYKCPHHSIDLTLCDAIIQKYGGNYLSHLVYSGDKDCFFNENKDSFIMYRYKSNALVVLGDPIGNTKSFESLLEAFYQFAEYQGYEIIFYQISDQYMPLYHNFGNQFFKLGEEAIIDLTTFTTSGKKRRGFRATLNKFDDLNINFEIIEPPFTQDFFDELKFVSDKWLDGRSEMHFSVGQFTQTYLSKAPIGVMRDHSGKMIAFCSLMPTYSNNAISVDLIRWLPELDLPLMDGLYLHMLLWSKEKGYKAFNMGMATLSNVGQLHYSYLRERMAGRVFEHFNGLYRFQGLRRYKEKYSPNWEPRFLVYQKHYSLWESMLKVMRVIRHK.

Topologically, residues 1–8 (MTQELKSK) are cytoplasmic. Residues 9-29 (LLSFFKFIFATALFIFVIFTL) form a helical membrane-spanning segment. Residues 30 to 52 (YRELSHINFKETFIQFGKINRLW) are Extracellular-facing. The helical transmembrane segment at 53–73 (LVLLFAGGGLSLILLSLYDII) threads the bilayer. Topologically, residues 74 to 89 (LVKALKLKMPLIRVFR) are cytoplasmic. A helical transmembrane segment spans residues 90–110 (VSYIINALNSIIGFGGFIGAG). At 111-129 (VRAFVYKNYTNDTKKLVQY) the chain is on the extracellular side. The chain crosses the membrane as a helical span at residues 130–150 (ISIILVSMLTGLSLLSILVVL). Topologically, residues 151 to 161 (RIFNASHMIDE) are cytoplasmic. A helical transmembrane segment spans residues 162–182 (ISWVRWILYIVALFLPIFIFY). The Extracellular segment spans residues 183–200 (TVARPVDRNNRYMGVYCT). A helical transmembrane segment spans residues 201–221 (VVSCVEWMAAATVLYFAALIV). Residues 222–229 (DIHISFMT) are Cytoplasmic-facing. A helical transmembrane segment spans residues 230–250 (FVGIFVIAALSGLVSFIPGGF). The Extracellular segment spans residues 251 to 270 (GAFDLVVLLGLKSLGISEEK). A helical transmembrane segment spans residues 271 to 291 (ILLALVLYRFAYYFVPVMIAL). At 292–337 (ILSSFEFGNTAKKYLDNSKYFIPVKDFTSFLRSYQKDILAKVPSFS) the chain is on the cytoplasmic side. The helical transmembrane segment at 338-358 (LAILIFLTSIIFFINNLTIVY) threads the bilayer. The Extracellular portion of the chain corresponds to 359–366 (DGLYDGNH). Residues 367–387 (FAYYIALAVQTSACLLLILNV) traverse the membrane as a helical segment. Over 388–392 (RGIYK) the chain is Cytoplasmic. Residues 393-413 (GSRRAIIYAFISIILIASATI) traverse the membrane as a helical segment. Topologically, residues 414-415 (YT) are extracellular. A helical membrane pass occupies residues 416-436 (YASFLLLSWLIIIFVLLILAY). Over 437–450 (QRAQVLKRPLRFKK) the chain is Cytoplasmic. A helical transmembrane segment spans residues 451 to 471 (LAVMLLLSIFILYLNHILISG). The Extracellular segment spans residues 472–489 (TLYALDVYHIEIDTSLLR). Residues 490–510 (YYFWMTIVIIMLLVGVIAWLF) form a helical membrane-spanning segment. Over 511–840 (DYKYKCPHHS…LKVMRVIRHK (330 aa)) the chain is Cytoplasmic.

Belongs to the LPG synthase family.

It is found in the cell membrane. It carries out the reaction L-lysyl-tRNA(Lys) + a 1,2-diacyl-sn-glycero-3-phospho-(1'-sn-glycerol) = a 1,2-diacyl-sn-glycero-3-phospho-1'-(3'-O-L-lysyl)-sn-glycerol + tRNA(Lys). Functionally, catalyzes the transfer of a lysyl group from L-lysyl-tRNA(Lys) to membrane-bound phosphatidylglycerol (PG), which produces lysylphosphatidylglycerol (LPG), a major component of the bacterial membrane with a positive net charge. LPG synthesis contributes to bacterial virulence as it is involved in the resistance mechanism against cationic antimicrobial peptides (CAMP) produces by the host's immune system (defensins, cathelicidins) and by the competing microorganisms (bacteriocins). In fact, the modification of anionic phosphatidylglycerol with positively charged L-lysine results in repulsion of the peptides. This chain is Phosphatidylglycerol lysyltransferase (mprF), found in Staphylococcus epidermidis (strain ATCC 12228 / FDA PCI 1200).